Here is a 163-residue protein sequence, read N- to C-terminus: Bursicon (163 aa).

An N-terminal signal peptide occupies residues 1 to 23; sequence MKSSVCVLLKVLACILLPGGLNA. Intrachain disulfides connect Cys39–Cys88, Cys53–Cys102, Cys63–Cys123, Cys67–Cys125, and Cys85–Cys128. The CTCK domain occupies 39 to 129; sequence CQVTPVIHVL…PLECMCRPCT (91 aa).

As to quaternary structure, heterodimer of burs and pburs.

It localises to the secreted. Functionally, final heterodimeric neurohormone released at the end of the molting cycle, involved in the sclerotization (tanning) of the insect cuticle, melanization and wing spreading. This Aedes aegypti (Yellowfever mosquito) protein is Bursicon.